We begin with the raw amino-acid sequence, 425 residues long: 5-nitroanthranilic acid aminohydrolase (425 aa).

The active site involves Asp-88. Glu-158 serves as the catalytic Proton acceptor.

This sequence belongs to the peptidase M20A family. Requires Co(2+) as cofactor. Mn(2+) serves as cofactor. Zn(2+) is required as a cofactor. It depends on Fe(2+) as a cofactor. The cofactor is Ni(2+).

The catalysed reaction is 5-nitroanthranilate + H2O + H(+) = 5-nitrosalicylate + NH4(+). Catalyzes the deamination of 5-nitroanthranilate (5NAA) to 5-nitrosalicylate (5NSA), the first step in biodegradation of 5-nitroanthranilate. The sequence is that of 5-nitroanthranilic acid aminohydrolase (naaA) from Bradyrhizobium sp.